The sequence spans 231 residues: Large ribosomal subunit protein uL1 (231 aa).

This sequence belongs to the universal ribosomal protein uL1 family. In terms of assembly, part of the 50S ribosomal subunit.

Binds directly to 23S rRNA. The L1 stalk is quite mobile in the ribosome, and is involved in E site tRNA release. Functionally, protein L1 is also a translational repressor protein, it controls the translation of the L11 operon by binding to its mRNA. This chain is Large ribosomal subunit protein uL1, found in Teredinibacter turnerae (strain ATCC 39867 / T7901).